A 404-amino-acid chain; its full sequence is Cysteine desulfurase IscS (404 aa).

Pyridoxal 5'-phosphate-binding positions include 75–76, Asn-155, Gln-183, and 203–205; these read AT and SGH. Lys-206 carries the N6-(pyridoxal phosphate)lysine modification. Thr-243 is a binding site for pyridoxal 5'-phosphate. Residue Cys-328 is the Cysteine persulfide intermediate of the active site. A [2Fe-2S] cluster-binding site is contributed by Cys-328.

This sequence belongs to the class-V pyridoxal-phosphate-dependent aminotransferase family. NifS/IscS subfamily. As to quaternary structure, homodimer. Forms a heterotetramer with IscU, interacts with other sulfur acceptors. The cofactor is pyridoxal 5'-phosphate.

It is found in the cytoplasm. It carries out the reaction (sulfur carrier)-H + L-cysteine = (sulfur carrier)-SH + L-alanine. Its pathway is cofactor biosynthesis; iron-sulfur cluster biosynthesis. In terms of biological role, master enzyme that delivers sulfur to a number of partners involved in Fe-S cluster assembly, tRNA modification or cofactor biosynthesis. Catalyzes the removal of elemental sulfur atoms from cysteine to produce alanine. Functions as a sulfur delivery protein for Fe-S cluster synthesis onto IscU, an Fe-S scaffold assembly protein, as well as other S acceptor proteins. The protein is Cysteine desulfurase IscS of Shewanella pealeana (strain ATCC 700345 / ANG-SQ1).